An 850-amino-acid chain; its full sequence is Mitochondrial escape protein 2 (850 aa).

The N-terminal 44 residues, 1–44 (MLLVRTTSLNVSRMPVPCLARGIGILKGKYRLANLMNAQPSVRH), are a transit peptide targeting the mitochondrion. Residues 44–66 (HVSSEIQQKDQQAGESNTATDTG) form a disordered region. At 45–287 (VSSEIQQKDQ…VSNFFTNHTR (243 aa)) the chain is on the mitochondrial matrix side. The segment covering 47–64 (SEIQQKDQQAGESNTATD) has biased composition (polar residues). Positions 198 to 272 (TTIVIKFQGP…TVLHIQYENI (75 aa)) constitute an RRM domain. Residues 288 to 308 (IAIPVLFALLSIFAVLVFDPI) traverse the membrane as a helical segment. The Mitochondrial intermembrane portion of the chain corresponds to 309–850 (REFSIEQKIT…CEEEIKNLSK (542 aa)). Basic and acidic residues predominate over residues 607-621 (KGENVKEPESEKEIA). A disordered region spans residues 607–633 (KGENVKEPESEKEIAENNDSDSEADTS).

This sequence belongs to the YME2 family.

The protein resides in the mitochondrion inner membrane. Its function is as follows. Plays a role in maintaining the mitochondrial genome and in controlling the mtDNA escape. Involved in the regulation of mtDNA nucleotide structure and number. May have a dispensable role in early maturation of pre-rRNA. This chain is Mitochondrial escape protein 2 (YME2), found in Saccharomyces cerevisiae (strain YJM789) (Baker's yeast).